A 288-amino-acid polypeptide reads, in one-letter code: Shikimate dehydrogenase (NADP(+)) (288 aa).

Shikimate is bound by residues 18-20 (SRS) and T65. K69 acts as the Proton acceptor in catalysis. E81 lines the NADP(+) pocket. Shikimate-binding residues include N90 and D106. NADP(+) contacts are provided by residues 131-135 (GAGGA), 155-160 (NRTLAK), and M223. Residue Y225 coordinates shikimate. G246 lines the NADP(+) pocket.

It belongs to the shikimate dehydrogenase family. Homodimer.

The enzyme catalyses shikimate + NADP(+) = 3-dehydroshikimate + NADPH + H(+). The protein operates within metabolic intermediate biosynthesis; chorismate biosynthesis; chorismate from D-erythrose 4-phosphate and phosphoenolpyruvate: step 4/7. Involved in the biosynthesis of the chorismate, which leads to the biosynthesis of aromatic amino acids. Catalyzes the reversible NADPH linked reduction of 3-dehydroshikimate (DHSA) to yield shikimate (SA). The sequence is that of Shikimate dehydrogenase (NADP(+)) from Verminephrobacter eiseniae (strain EF01-2).